Consider the following 574-residue polypeptide: DNA mismatch repair protein MutL (574 aa).

It belongs to the DNA mismatch repair MutL/HexB family.

Functionally, this protein is involved in the repair of mismatches in DNA. It is required for dam-dependent methyl-directed DNA mismatch repair. May act as a 'molecular matchmaker', a protein that promotes the formation of a stable complex between two or more DNA-binding proteins in an ATP-dependent manner without itself being part of a final effector complex. The sequence is that of DNA mismatch repair protein MutL from Coxiella burnetii (strain Dugway 5J108-111).